The following is a 435-amino-acid chain: Bifunctional protein GlmU (435 aa).

A pyrophosphorylase region spans residues 1-224; the sequence is MNDTSIIILA…EQNFMGINDK (224 aa). UDP-N-acetyl-alpha-D-glucosamine is bound by residues 9 to 12, K23, Q75, and 82 to 83; these read LAAG and GT. D103 is a Mg(2+) binding site. Positions 136, 150, 165, and 222 each coordinate UDP-N-acetyl-alpha-D-glucosamine. N222 lines the Mg(2+) pocket. Residues 225 to 245 form a linker region; that stretch reads FQLSVAEKIMQDEIKQDLMKA. Residues 246–435 are N-acetyltransferase; the sequence is GVLMRLPESI…KFFGKNNAEK (190 aa). UDP-N-acetyl-alpha-D-glucosamine contacts are provided by R309 and K326. The active-site Proton acceptor is the H337. Positions 340 and 351 each coordinate UDP-N-acetyl-alpha-D-glucosamine. Residues 360-361, S379, A397, and R414 contribute to the acetyl-CoA site; that span reads NY.

In the N-terminal section; belongs to the N-acetylglucosamine-1-phosphate uridyltransferase family. This sequence in the C-terminal section; belongs to the transferase hexapeptide repeat family. In terms of assembly, homotrimer. The cofactor is Mg(2+).

Its subcellular location is the cytoplasm. The enzyme catalyses alpha-D-glucosamine 1-phosphate + acetyl-CoA = N-acetyl-alpha-D-glucosamine 1-phosphate + CoA + H(+). It carries out the reaction N-acetyl-alpha-D-glucosamine 1-phosphate + UTP + H(+) = UDP-N-acetyl-alpha-D-glucosamine + diphosphate. It participates in nucleotide-sugar biosynthesis; UDP-N-acetyl-alpha-D-glucosamine biosynthesis; N-acetyl-alpha-D-glucosamine 1-phosphate from alpha-D-glucosamine 6-phosphate (route II): step 2/2. Its pathway is nucleotide-sugar biosynthesis; UDP-N-acetyl-alpha-D-glucosamine biosynthesis; UDP-N-acetyl-alpha-D-glucosamine from N-acetyl-alpha-D-glucosamine 1-phosphate: step 1/1. It functions in the pathway bacterial outer membrane biogenesis; LPS lipid A biosynthesis. Functionally, catalyzes the last two sequential reactions in the de novo biosynthetic pathway for UDP-N-acetylglucosamine (UDP-GlcNAc). The C-terminal domain catalyzes the transfer of acetyl group from acetyl coenzyme A to glucosamine-1-phosphate (GlcN-1-P) to produce N-acetylglucosamine-1-phosphate (GlcNAc-1-P), which is converted into UDP-GlcNAc by the transfer of uridine 5-monophosphate (from uridine 5-triphosphate), a reaction catalyzed by the N-terminal domain. In Campylobacter curvus (strain 525.92), this protein is Bifunctional protein GlmU.